The primary structure comprises 154 residues: uncharacterized protein (154 aa).

Residues S23–A43 form a helical membrane-spanning segment.

It localises to the membrane. This is an uncharacterized protein from Mycobacterium tuberculosis (strain CDC 1551 / Oshkosh).